The sequence spans 521 residues: MSL complex subunit 3 (521 aa).

One can recognise a Tudor-knot domain in the interval 13–71; that stretch reads SGEKVLCFEPDPTKARVLYDAKIVDVIVGKDEKGRKIPEYLIHFNGWNRSWDRWAAEDH. 2 disordered regions span residues 114–166 and 298–409; these read KGLP…TRRE and ATST…PSKE. Positions 139–149 are enriched in acidic residues; sequence KDEEISEESDI. Basic and acidic residues predominate over residues 150–166; sequence EEKTEVKEEPELQTRRE. Residues 168 to 517 form the MRG domain; sequence EERTITIEIP…CEAHYSTKNP (350 aa). A required for the histone acetyltransferase activity of the MSL complex region spans residues 290–440; the sequence is FFLPIKESAT…WKLVPDNYPP (151 aa). Phosphoserine is present on residues S309 and S311. Residues 316–329 are compositionally biased toward low complexity; the sequence is NPSTPQSTESQPTT. Phosphoserine is present on residues S367 and S400. Residue T405 is modified to Phosphothreonine. 2 positions are modified to phosphoserine: S407 and S411.

As to quaternary structure, component of the MSL histone acetyltransferase complex at least composed of the KAT8/MOF, MSL1/hampin, MSL2 and MSL3. Interacts (via the MRG domain) with MSL1 and KAT8/MOF. As to expression, expressed in many tissues including liver, pancreas, heart, lung, kidney, skeletal muscle, brain, and placenta, with highest expression in skeletal muscle and heart.

The protein resides in the nucleus. Non-catalytic component of the MSL histone acetyltransferase complex, a multiprotein complex that mediates the majority of histone H4 acetylation at 'Lys-16' (H4K16ac), an epigenetic mark that prevents chromatin compaction. The MSL complex is required for chromosome stability and genome integrity by maintaining homeostatic levels of H4K16ac. The MSL complex is also involved in gene dosage by promoting up-regulation of genes expressed by the X chromosome. X up-regulation is required to compensate for autosomal biallelic expression. The MSL complex also participates in gene dosage compensation by promoting expression of Tsix non-coding RNA. Acts as a histone reader that specifically recognizes and binds histone H4 monomethylated at 'Lys-20' (H4K20Me1) in a DNA-dependent manner and is proposed to be involved in chromosomal targeting of the MSL complex. May play a role X inactivation in females. The chain is MSL complex subunit 3 from Homo sapiens (Human).